A 109-amino-acid chain; its full sequence is Nucleoid-associated protein PM0205 (109 aa).

It belongs to the YbaB/EbfC family. Homodimer.

The protein resides in the cytoplasm. The protein localises to the nucleoid. In terms of biological role, binds to DNA and alters its conformation. May be involved in regulation of gene expression, nucleoid organization and DNA protection. This Pasteurella multocida (strain Pm70) protein is Nucleoid-associated protein PM0205.